We begin with the raw amino-acid sequence, 288 residues long: Bifunctional protein FolD (288 aa).

Residues 171–173 (GRS), Ser-196, and Thr-237 contribute to the NADP(+) site.

It belongs to the tetrahydrofolate dehydrogenase/cyclohydrolase family. In terms of assembly, homodimer.

It carries out the reaction (6R)-5,10-methylene-5,6,7,8-tetrahydrofolate + NADP(+) = (6R)-5,10-methenyltetrahydrofolate + NADPH. It catalyses the reaction (6R)-5,10-methenyltetrahydrofolate + H2O = (6R)-10-formyltetrahydrofolate + H(+). Its pathway is one-carbon metabolism; tetrahydrofolate interconversion. Its function is as follows. Catalyzes the oxidation of 5,10-methylenetetrahydrofolate to 5,10-methenyltetrahydrofolate and then the hydrolysis of 5,10-methenyltetrahydrofolate to 10-formyltetrahydrofolate. This is Bifunctional protein FolD from Elusimicrobium minutum (strain Pei191).